The following is a 354-amino-acid chain: Guanine nucleotide-binding protein G(t) subunit alpha-2 (354 aa).

Positions 1–27 (MGSGASAEDKELAKRSKELEKKLQEDA) are disordered. Gly2 carries the N-myristoyl glycine lipid modification. The span at 7 to 27 (AEDKELAKRSKELEKKLQEDA) shows a compositional bias: basic and acidic residues. One can recognise a G-alpha domain in the interval 32–354 (KTVKLLLLGA…KENLKDCGLF (323 aa)). Residues 35-48 (KLLLLGAGESGKST) are G1 motif. Residues 40-47 (GAGESGKS), 175-181 (LRSRVKT), 200-204 (DVGGQ), 269-272 (NKKD), and Ala326 contribute to the GTP site. Ser47 and Thr181 together coordinate Mg(2+). A G2 motif region spans residues 173-181 (DVLRSRVKT). The segment at 196–205 (FRMFDVGGQR) is G3 motif. The interval 265–272 (VLFLNKKD) is G4 motif. A G5 motif region spans residues 324–329 (TCATDT).

Belongs to the G-alpha family. G(i/o/t/z) subfamily. In terms of assembly, g proteins are composed of 3 units; alpha, beta and gamma. The alpha chain contains the guanine nucleotide binding site. In terms of tissue distribution, retinal rod outer segment.

The protein resides in the cell projection. It localises to the cilium. It is found in the photoreceptor outer segment. Its subcellular location is the photoreceptor inner segment. Its function is as follows. Guanine nucleotide-binding proteins (G proteins) are involved as modulators or transducers in various transmembrane signaling systems. Transducin is an amplifier and one of the transducers of a visual impulse that performs the coupling between rhodopsin and cGMP-phosphodiesterase. The chain is Guanine nucleotide-binding protein G(t) subunit alpha-2 (GNAT2) from Bos taurus (Bovine).